A 361-amino-acid polypeptide reads, in one-letter code: MLNEVLKGIEGLDNDMIVKAKNRVDSLAKPLGSLGKLEDIAIRLSGITGNMFNNIDKKCVIIMSSDNGVEEEGVASAPQCVTLLQTKNFIKGTTGVATLAKANGTDLMVFDVGINSDEVVEGVINRKISKGTKNIYKEPAMTYEEAKKSLEIGIEAVKIAKEKGYKILGVGEMGIGNTTTSAAVLKALIGCETSQVVGKGGGINNDSFEKKKRIVEEVVKKHNINFDDSIDIISKVGGYDIGAMTGVFLGAAFYRIPVVIDGFISVVTALLANRLNPLVKEFCFTSHKSQEIGYELAIKELGLDPMLDLNMRLGEGSGCPIAFSVIDFATAMMNNMATFEEGNIDNSYLEDVKDEECYIVL.

Residue Glu-315 is the Proton acceptor of the active site.

The protein belongs to the CobT family.

The enzyme catalyses 5,6-dimethylbenzimidazole + nicotinate beta-D-ribonucleotide = alpha-ribazole 5'-phosphate + nicotinate + H(+). It participates in nucleoside biosynthesis; alpha-ribazole biosynthesis; alpha-ribazole from 5,6-dimethylbenzimidazole: step 1/2. Its function is as follows. Catalyzes the synthesis of alpha-ribazole-5'-phosphate from nicotinate mononucleotide (NAMN) and 5,6-dimethylbenzimidazole (DMB). The polypeptide is Nicotinate-nucleotide--dimethylbenzimidazole phosphoribosyltransferase (Clostridium perfringens (strain 13 / Type A)).